The primary structure comprises 80 residues: MAKSAAIITFLFAALVLFAAFEAPIMVEAQKLCEKPSGTWSGVCGNSNACKNQCINLEGAKHGSCNYVFPAHKCICYFPC.

The signal sequence occupies residues 1-29 (MAKSAAIITFLFAALVLFAAFEAPIMVEA). A Pyrrolidone carboxylic acid modification is found at Gln-30. 4 cysteine pairs are disulfide-bonded: Cys-33–Cys-80, Cys-44–Cys-65, Cys-50–Cys-74, and Cys-54–Cys-76.

It belongs to the DEFL family.

Its subcellular location is the secreted. Functionally, confers broad-spectrum resistance to pathogens. Has antifungal activity in vitro. This is Defensin-like protein 14 (PDF1.3) from Arabidopsis thaliana (Mouse-ear cress).